The chain runs to 239 residues: Demethylmenaquinone methyltransferase (239 aa).

S-adenosyl-L-methionine-binding positions include Thr60, Asp81, and 106 to 107 (DA).

This sequence belongs to the class I-like SAM-binding methyltransferase superfamily. MenG/UbiE family.

The enzyme catalyses a 2-demethylmenaquinol + S-adenosyl-L-methionine = a menaquinol + S-adenosyl-L-homocysteine + H(+). It participates in quinol/quinone metabolism; menaquinone biosynthesis; menaquinol from 1,4-dihydroxy-2-naphthoate: step 2/2. Its function is as follows. Methyltransferase required for the conversion of demethylmenaquinol (DMKH2) to menaquinol (MKH2). In Staphylococcus haemolyticus (strain JCSC1435), this protein is Demethylmenaquinone methyltransferase.